The following is a 349-amino-acid chain: Peroxidase C3 (349 aa).

The N-terminal stretch at 1–29 (MGFSPLISCSAMGALILSCLLLQASNSNA) is a signal peptide. 4 disulfide bridges follow: Cys-40–Cys-120, Cys-73–Cys-78, Cys-126–Cys-329, and Cys-206–Cys-238. His-71 serves as the catalytic Proton acceptor. 5 residues coordinate Ca(2+): Asp-72, Val-75, Gly-77, Asp-79, and Ser-81. Asn-86 carries N-linked (GlcNAc...) asparagine glycosylation. Pro-168 is a substrate binding site. His-199 contacts heme b. A Ca(2+)-binding site is contributed by Thr-200. Asn-217 and Asn-243 each carry an N-linked (GlcNAc...) asparagine glycan. Residues Asp-251, Thr-254, and Asp-259 each coordinate Ca(2+).

It belongs to the peroxidase family. Classical plant (class III) peroxidase subfamily. Requires Ca(2+) as cofactor. It depends on heme b as a cofactor.

Its subcellular location is the secreted. It is found in the vacuole. The enzyme catalyses 2 a phenolic donor + H2O2 = 2 a phenolic radical donor + 2 H2O. Its function is as follows. Removal of H(2)O(2), oxidation of toxic reductants, biosynthesis and degradation of lignin, suberization, auxin catabolism, response to environmental stresses such as wounding, pathogen attack and oxidative stress. These functions might be dependent on each isozyme/isoform in each plant tissue. This is Peroxidase C3 (PRXC3) from Armoracia rusticana (Horseradish).